The primary structure comprises 488 residues: Bifunctional protein HldE (488 aa).

The tract at residues 1–327 (MDDTLAKLPR…GLAHGEHADP (327 aa)) is ribokinase. 201-204 (NRRE) is an ATP binding site. The active site involves Asp272. The interval 354 to 488 (FTNGCFDLLH…GRMNAPAVGG (135 aa)) is cytidylyltransferase.

In the N-terminal section; belongs to the carbohydrate kinase PfkB family. It in the C-terminal section; belongs to the cytidylyltransferase family. Homodimer.

The catalysed reaction is D-glycero-beta-D-manno-heptose 7-phosphate + ATP = D-glycero-beta-D-manno-heptose 1,7-bisphosphate + ADP + H(+). It carries out the reaction D-glycero-beta-D-manno-heptose 1-phosphate + ATP + H(+) = ADP-D-glycero-beta-D-manno-heptose + diphosphate. Its pathway is nucleotide-sugar biosynthesis; ADP-L-glycero-beta-D-manno-heptose biosynthesis; ADP-L-glycero-beta-D-manno-heptose from D-glycero-beta-D-manno-heptose 7-phosphate: step 1/4. It participates in nucleotide-sugar biosynthesis; ADP-L-glycero-beta-D-manno-heptose biosynthesis; ADP-L-glycero-beta-D-manno-heptose from D-glycero-beta-D-manno-heptose 7-phosphate: step 3/4. Its function is as follows. Catalyzes the phosphorylation of D-glycero-D-manno-heptose 7-phosphate at the C-1 position to selectively form D-glycero-beta-D-manno-heptose-1,7-bisphosphate. In terms of biological role, catalyzes the ADP transfer from ATP to D-glycero-beta-D-manno-heptose 1-phosphate, yielding ADP-D-glycero-beta-D-manno-heptose. This chain is Bifunctional protein HldE, found in Caulobacter sp. (strain K31).